Reading from the N-terminus, the 184-residue chain is Photosystem I assembly protein Ycf4 (184 aa).

2 helical membrane passes run 22–42 (FCWA…GISS) and 57–77 (IVFF…LFIS).

This sequence belongs to the Ycf4 family.

It is found in the plastid. Its subcellular location is the chloroplast thylakoid membrane. Functionally, seems to be required for the assembly of the photosystem I complex. This is Photosystem I assembly protein Ycf4 from Coffea arabica (Arabian coffee).